The sequence spans 61 residues: MARKALIEKWKKEPKYSTRAYTRCKICGRPHSVLKKYGICRICFRELAYKGEIPGCRKASW.

Zn(2+) is bound by residues cysteine 24, cysteine 27, cysteine 40, and cysteine 43.

It belongs to the universal ribosomal protein uS14 family. Zinc-binding uS14 subfamily. In terms of assembly, part of the 30S ribosomal subunit. Contacts proteins S3 and S10. Zn(2+) is required as a cofactor.

In terms of biological role, binds 16S rRNA, required for the assembly of 30S particles and may also be responsible for determining the conformation of the 16S rRNA at the A site. The chain is Small ribosomal subunit protein uS14 from Clostridium acetobutylicum (strain ATCC 824 / DSM 792 / JCM 1419 / IAM 19013 / LMG 5710 / NBRC 13948 / NRRL B-527 / VKM B-1787 / 2291 / W).